A 582-amino-acid polypeptide reads, in one-letter code: Phosphoribosylaminoimidazole carboxylase (582 aa).

Residues 114 to 305 (KKYLAEKGVA…QFENHLRAIL (192 aa)) form the ATP-grasp domain. Residue 143–200 (AGRLGLPLMLKAKTLAYDGRGNSPLKSTSSEDIQASLKFLGDRPLYAEGWAPFVKEVA) coordinates ATP.

In the C-terminal section; belongs to the AIR carboxylase family. Class I subfamily.

It carries out the reaction 5-amino-1-(5-phospho-D-ribosyl)imidazole-4-carboxylate + H(+) = 5-amino-1-(5-phospho-beta-D-ribosyl)imidazole + CO2. The protein operates within purine metabolism; IMP biosynthesis via de novo pathway; 5-amino-1-(5-phospho-D-ribosyl)imidazole-4-carboxylate from 5-amino-1-(5-phospho-D-ribosyl)imidazole (carboxylase route): step 1/1. This chain is Phosphoribosylaminoimidazole carboxylase (ADE2), found in Cryptococcus neoformans var. grubii serotype A (strain H99 / ATCC 208821 / CBS 10515 / FGSC 9487) (Filobasidiella neoformans var. grubii).